A 508-amino-acid polypeptide reads, in one-letter code: MTANEFILALDQGTTSSRAIVFDRAGTVRGMGQREFRQHYPRPGWVEHDAGEIWQSQLEVAREALRNAGASAADLAALGITNQRETTLIWERATGRPLARAIVWQDRRTAAMCEKLLHDGHGRMLQERTGLVVDAYFSGTKLAWLLDHVPGARKMAERGELAFGTMDTWLVWQLTGGAVHSTDPSNASRTMLFDLHAQDWSDDILALLNIPRGILPRIAPSSARIGETLPEWLGGSIPIAGVAGDQQAATFGQACFTPGMAKNTYGTGCFMLMNVGDAPVASRHNLLSTVGWSLPAGNATHATYMVEGGVFMAGAAVQWLRDGLGIIQRSADIEALAASVADTDDVFMVPAFAGLGAPHWDPYARGTLVGMTRGTTRAHIARATLESIALQSAELLSCMNADSGIPLSELRVDGSAARNDLLMQMQADLLGVPVVRPRVPESTALGAAGLAGLAVGFWSSLDEFGAQWQAERTFEPAWPADVREARMQRWRQAVELSKGWSRPAAGHA.

Threonine 14 contributes to the ADP binding site. Threonine 14, threonine 15, and serine 16 together coordinate ATP. Threonine 14 serves as a coordination point for sn-glycerol 3-phosphate. Arginine 18 provides a ligand contact to ADP. Sn-glycerol 3-phosphate is bound by residues arginine 84, glutamate 85, tyrosine 136, and aspartate 245. Glycerol contacts are provided by arginine 84, glutamate 85, tyrosine 136, aspartate 245, and glutamine 246. ADP is bound by residues threonine 267 and glycine 314. 3 residues coordinate ATP: threonine 267, glycine 314, and glutamine 318. Asparagine 419 lines the ADP pocket.

The protein belongs to the FGGY kinase family.

The enzyme catalyses glycerol + ATP = sn-glycerol 3-phosphate + ADP + H(+). Its pathway is polyol metabolism; glycerol degradation via glycerol kinase pathway; sn-glycerol 3-phosphate from glycerol: step 1/1. With respect to regulation, inhibited by fructose 1,6-bisphosphate (FBP). Its function is as follows. Key enzyme in the regulation of glycerol uptake and metabolism. Catalyzes the phosphorylation of glycerol to yield sn-glycerol 3-phosphate. This is Glycerol kinase from Bordetella pertussis (strain Tohama I / ATCC BAA-589 / NCTC 13251).